A 288-amino-acid chain; its full sequence is Elongation factor Ts (288 aa).

Residues 82–85 (TDFV) are involved in Mg(2+) ion dislocation from EF-Tu.

This sequence belongs to the EF-Ts family.

It is found in the cytoplasm. In terms of biological role, associates with the EF-Tu.GDP complex and induces the exchange of GDP to GTP. It remains bound to the aminoacyl-tRNA.EF-Tu.GTP complex up to the GTP hydrolysis stage on the ribosome. This chain is Elongation factor Ts, found in Prosthecochloris aestuarii (strain DSM 271 / SK 413).